The primary structure comprises 553 residues: Putative transport protein KPK_0013 (553 aa).

A run of 5 helical transmembrane segments spans residues 4–24, 28–48, 65–85, 95–115, and 158–178; these read IALT…IGNV, GVGF…HFVD, FGLI…FFAS, LFAI…HKLF, and MSYA…MWLV. RCK C-terminal domains follow at residues 192–276 and 279–361; these read RFEE…VIGQ and ATSL…ELGN. 6 helical membrane-spanning segments follow: residues 371–391, 403–425, 437–457, 464–484, 493–513, and 532–552; these read MLPV…PLFI, AGGP…LYWF, LGIV…FVAT, LSWI…VGIL, YLTL…LAFA, and PLVM…FWGL.

This sequence belongs to the AAE transporter (TC 2.A.81) family. YidE subfamily.

It is found in the cell membrane. In Klebsiella pneumoniae (strain 342), this protein is Putative transport protein KPK_0013.